The primary structure comprises 426 residues: Glutamate-1-semialdehyde 2,1-aminomutase (426 aa).

The residue at position 265 (Lys265) is an N6-(pyridoxal phosphate)lysine.

The protein belongs to the class-III pyridoxal-phosphate-dependent aminotransferase family. HemL subfamily. In terms of assembly, homodimer. Requires pyridoxal 5'-phosphate as cofactor.

Its subcellular location is the cytoplasm. It carries out the reaction (S)-4-amino-5-oxopentanoate = 5-aminolevulinate. The protein operates within porphyrin-containing compound metabolism; protoporphyrin-IX biosynthesis; 5-aminolevulinate from L-glutamyl-tRNA(Glu): step 2/2. This chain is Glutamate-1-semialdehyde 2,1-aminomutase, found in Escherichia coli O9:H4 (strain HS).